A 258-amino-acid chain; its full sequence is Spindlin-2 (258 aa).

Residues 1-47 (MKTPHKKATARQQTREIVDDHTLSASMRKKKISQKKQRGRPSSQTRR) are disordered. The segment covering 13–22 (QTREIVDDHT) has biased composition (basic and acidic residues). Over residues 27–39 (MRKKKISQKKQRG) the composition is skewed to basic residues. Tudor-like domain regions lie at residues 50 to 99 (VGCR…LELH), 129 to 178 (IGKA…YQLL), and 210 to 255 (IGKH…YDLV). Histone H3K4me3 and H3R8me2a binding regions lie at residues Glu-138 and 246 to 248 (DFH).

Belongs to the SPIN/STSY family. As to quaternary structure, interacts with C11orf84/SPINDOC.

The protein resides in the nucleus. Its function is as follows. May be involved in the regulation of cell cycle progression. Exhibits H3K4me3-binding activity. This Bos taurus (Bovine) protein is Spindlin-2 (SPIN2).